The chain runs to 24 residues: Frenatin-4 (24 aa).

Expressed by the skin glands.

It is found in the secreted. Its function is as follows. Very weak antimicrobial peptide since it does not show activity below 100 ug/ml against Bacillus cereus, Escherichia coli, Leuconostoc mesenteroides, Micrococcus luteus, Pastewella haemolytica, Staphylococcus aureus, Streptococcus faecalis and Streptococcus uberis. This chain is Frenatin-4, found in Nyctimystes infrafrenatus (White-lipped tree frog).